Reading from the N-terminus, the 484-residue chain is Cysteine--tRNA ligase (484 aa).

Cys27 is a Zn(2+) binding site. Residues 29 to 39 carry the 'HIGH' region motif; sequence PTTYNYIHLGN. Cys207, His232, and Glu236 together coordinate Zn(2+). Positions 264 to 268 match the 'KMSKS' region motif; it reads KMSKS. Lys267 is a binding site for ATP.

Belongs to the class-I aminoacyl-tRNA synthetase family. Monomer. The cofactor is Zn(2+).

It localises to the cytoplasm. It carries out the reaction tRNA(Cys) + L-cysteine + ATP = L-cysteinyl-tRNA(Cys) + AMP + diphosphate. This Pelotomaculum thermopropionicum (strain DSM 13744 / JCM 10971 / SI) protein is Cysteine--tRNA ligase.